Here is a 179-residue protein sequence, read N- to C-terminus: Endoribonuclease YbeY (179 aa).

Zn(2+)-binding residues include histidine 148, histidine 152, and histidine 158.

This sequence belongs to the endoribonuclease YbeY family. Requires Zn(2+) as cofactor.

It localises to the cytoplasm. Single strand-specific metallo-endoribonuclease involved in late-stage 70S ribosome quality control and in maturation of the 3' terminus of the 16S rRNA. This Prochlorococcus marinus (strain AS9601) protein is Endoribonuclease YbeY.